Reading from the N-terminus, the 138-residue chain is Phospholipase A2 EC3 (138 aa).

An N-terminal signal peptide occupies residues 1 to 16 (MRTLWIVAVWLMGVEG). 7 disulfide bridges follow: Cys42–Cys131, Cys44–Cys60, Cys59–Cys111, Cys65–Cys138, Cys66–Cys104, Cys73–Cys97, and Cys91–Cys102. Positions 43, 45, and 47 each coordinate Ca(2+). His63 is a catalytic residue. Ca(2+) is bound at residue Asp64. The active site involves Asp105.

It belongs to the phospholipase A2 family. Group II subfamily. It depends on Ca(2+) as a cofactor.

Its subcellular location is the secreted. The enzyme catalyses a 1,2-diacyl-sn-glycero-3-phosphocholine + H2O = a 1-acyl-sn-glycero-3-phosphocholine + a fatty acid + H(+). In terms of biological role, PA2 catalyzes the calcium-dependent hydrolysis of the 2-acyl groups in 3-sn-phosphoglycerides. This Echis coloratus (Carpet viper) protein is Phospholipase A2 EC3.